The chain runs to 160 residues: Large ribosomal subunit protein eL21 (160 aa).

Composition is skewed to basic and acidic residues over residues 112-123 and 136-146; these read NDQKKKEAKEKG and REAHFVRTNGK. A disordered region spans residues 112–146; it reads NDQKKKEAKEKGTWVQLNGQPAPPREAHFVRTNGK.

It belongs to the eukaryotic ribosomal protein eL21 family. As to quaternary structure, component of the large ribosomal subunit.

The protein localises to the cytoplasm. Its subcellular location is the cytosol. The protein resides in the endoplasmic reticulum. In terms of biological role, component of the large ribosomal subunit. The ribosome is a large ribonucleoprotein complex responsible for the synthesis of proteins in the cell. This Rattus norvegicus (Rat) protein is Large ribosomal subunit protein eL21 (Rpl21).